Here is a 241-residue protein sequence, read N- to C-terminus: Orotidine 5'-phosphate decarboxylase (241 aa).

Substrate contacts are provided by residues Asp15, Lys37, 64-73, Thr126, Arg187, Gln196, Gly216, and Arg217; that span reads DLKYHDIPNT. Lys66 functions as the Proton donor in the catalytic mechanism.

Belongs to the OMP decarboxylase family. Type 1 subfamily. As to quaternary structure, homodimer.

The enzyme catalyses orotidine 5'-phosphate + H(+) = UMP + CO2. The protein operates within pyrimidine metabolism; UMP biosynthesis via de novo pathway; UMP from orotate: step 2/2. In terms of biological role, catalyzes the decarboxylation of orotidine 5'-monophosphate (OMP) to uridine 5'-monophosphate (UMP). In Geotalea uraniireducens (strain Rf4) (Geobacter uraniireducens), this protein is Orotidine 5'-phosphate decarboxylase.